A 35-amino-acid polypeptide reads, in one-letter code: Z-limacoditoxin(1)-Dv4 (35 aa).

Positions methionine 1 to proline 22 are cleaved as a signal peptide. The residue at position 23 (glutamine 23) is a Pyrrolidone carboxylic acid. Proline 32 is modified (proline amide).

This sequence belongs to the limacoditoxin-1 (ACP-like) family. In terms of tissue distribution, expressed by the venom secretory cell of the spine. The spine is a cuticular structure containing a single large nucleated venom-secreting cell at its base. It is an independent unit capable of producing, storing and injecting venom. On the back of D.vulnerans caterpillars, spines are grouped together by 50 to 100 to form scoli, of which there are eight in D.vulnerans.

The protein resides in the secreted. Functionally, potently activates insect GPCR. More precisely, it activates the ACP receptor (ACPR) from the mosquito A.aegypti (EC(50)=3.07 nM) with a potency comparable to that of the endogenous ligand. Has no activity on receptors of the closely related neuropeptides adipokinetic hormone and corazonin. In vivo, does not reveal any observable effects when injected into crickets (A.domesticus). Does not induce increase in intracellular calcium in mouse DRG neurons, suggesting that it does not induce pain. The chain is Z-limacoditoxin(1)-Dv4 from Doratifera vulnerans (Mottled cup moth).